The following is a 519-amino-acid chain: Protein nucleotidyltransferase YdiU (519 aa).

Positions 100, 102, 103, 123, 135, 136, 193, and 200 each coordinate ATP. The active-site Proton acceptor is Asp-270. Mg(2+) is bound by residues Asn-271 and Asp-280. An ATP-binding site is contributed by Asp-280.

The protein belongs to the SELO family. Mg(2+) serves as cofactor. Requires Mn(2+) as cofactor.

It catalyses the reaction L-seryl-[protein] + ATP = 3-O-(5'-adenylyl)-L-seryl-[protein] + diphosphate. It carries out the reaction L-threonyl-[protein] + ATP = 3-O-(5'-adenylyl)-L-threonyl-[protein] + diphosphate. The catalysed reaction is L-tyrosyl-[protein] + ATP = O-(5'-adenylyl)-L-tyrosyl-[protein] + diphosphate. The enzyme catalyses L-histidyl-[protein] + UTP = N(tele)-(5'-uridylyl)-L-histidyl-[protein] + diphosphate. It catalyses the reaction L-seryl-[protein] + UTP = O-(5'-uridylyl)-L-seryl-[protein] + diphosphate. It carries out the reaction L-tyrosyl-[protein] + UTP = O-(5'-uridylyl)-L-tyrosyl-[protein] + diphosphate. Nucleotidyltransferase involved in the post-translational modification of proteins. It can catalyze the addition of adenosine monophosphate (AMP) or uridine monophosphate (UMP) to a protein, resulting in modifications known as AMPylation and UMPylation. The polypeptide is Protein nucleotidyltransferase YdiU (Xylella fastidiosa (strain 9a5c)).